The sequence spans 195 residues: HTH-type transcriptional regulator BetI (195 aa).

One can recognise an HTH tetR-type domain in the interval 8–68; the sequence is SIRRRQLIDA…ATMRDITSQL (61 aa). Positions 31–50 form a DNA-binding region, H-T-H motif; the sequence is TIAQIARRAGVSTGIISHYF.

Its pathway is amine and polyamine biosynthesis; betaine biosynthesis via choline pathway [regulation]. Functionally, repressor involved in the biosynthesis of the osmoprotectant glycine betaine. It represses transcription of the choline transporter BetT and the genes of BetAB involved in the synthesis of glycine betaine. In Escherichia coli (strain K12 / DH10B), this protein is HTH-type transcriptional regulator BetI.